We begin with the raw amino-acid sequence, 207 residues long: Ribonuclease HII (207 aa).

The RNase H type-2 domain maps to 12–201; sequence DLVAGVDEVG…VRAAWEAREG (190 aa). The a divalent metal cation site is built by Asp-18, Glu-19, and Asp-110.

Belongs to the RNase HII family. Requires Mn(2+) as cofactor. Mg(2+) is required as a cofactor.

Its subcellular location is the cytoplasm. It carries out the reaction Endonucleolytic cleavage to 5'-phosphomonoester.. In terms of biological role, endonuclease that specifically degrades the RNA of RNA-DNA hybrids. This is Ribonuclease HII from Pseudomonas putida (strain ATCC 47054 / DSM 6125 / CFBP 8728 / NCIMB 11950 / KT2440).